A 622-amino-acid chain; its full sequence is ABC transporter permease protein YxdM (622 aa).

The next 10 membrane-spanning stretches (helical) occupy residues 20-40 (AFFL…MFLF), 56-76 (GLTA…LYSV), 118-138 (AGII…AYIL), 154-174 (ITAC…ILFV), 195-215 (PSVL…GMVL), 219-239 (VHGA…YFFF), 279-299 (LFFI…VLAM), 498-518 (TVQL…VFFV), 558-578 (IQLA…TLFA), and 590-610 (VAGP…LFFL).

It belongs to the ABC-4 integral membrane protein family. As to quaternary structure, the complex is composed of two ATP-binding proteins (YxdL) and two transmembrane proteins (YxdM).

Its subcellular location is the cell membrane. Its function is as follows. Part of the ABC transporter complex YxdLM which could be involved in peptide resistance. The chain is ABC transporter permease protein YxdM (yxdM) from Bacillus subtilis (strain 168).